The sequence spans 379 residues: SUN domain-containing protein 5 (379 aa).

The tract at residues 1-45 (MPRSSRSPGDPGALLEDVAHNPRPRRIAQRGRNTSRMAEDTSPNM) is disordered. The Nuclear segment spans residues 1–105 (MPRSSRSPGD…LLCQKLMEKT (105 aa)). The segment covering 31–45 (GRNTSRMAEDTSPNM) has biased composition (polar residues). Residues 106–122 (GILLLCAFGFWMFSIHL) traverse the membrane as a helical segment. At 123 to 379 (PSKMKVWQDD…PHQNPYPKRD (257 aa)) the chain is on the perinuclear space side. Residues 141–182 (LRLYQEKVRHHSGEIQDLRGSMNQLIAKLQEMEAMSDEQKMA) are a coiled coil. The SUN domain occupies 205 to 364 (GASIDFEHTS…YRVRVHGSVA (160 aa)).

In terms of assembly, probable homotrimer. Interacts with DNAJB13. In terms of processing, highly glycosylated in the Golgi apparatus during spermiogenesis. Sperm (at protein level). Widely expressed. Conflictingly shown to be specifically expressed in testis.

The protein resides in the nucleus inner membrane. It is found in the golgi apparatus. In terms of biological role, plays an essential role in anchoring sperm head to the tail. Is responsible for the attachment of the coupling apparatus to the sperm nuclear envelope. This is SUN domain-containing protein 5 (SUN5) from Homo sapiens (Human).